The following is a 352-amino-acid chain: 4-hydroxy-2-oxovalerate aldolase 4 (352 aa).

A Pyruvate carboxyltransferase domain is found at 9 to 261 (IRVTDSSLRD…RTGIDTLKII (253 aa)). 17–18 (RD) serves as a coordination point for substrate. D18 is a binding site for Mn(2+). Catalysis depends on H21, which acts as the Proton acceptor. 2 residues coordinate substrate: S171 and H200. 2 residues coordinate Mn(2+): H200 and H202. Y291 is a substrate binding site.

This sequence belongs to the 4-hydroxy-2-oxovalerate aldolase family.

It catalyses the reaction (S)-4-hydroxy-2-oxopentanoate = acetaldehyde + pyruvate. The sequence is that of 4-hydroxy-2-oxovalerate aldolase 4 from Rhodococcus jostii (strain RHA1).